The sequence spans 287 residues: Coatomer subunit epsilon-1 (287 aa).

This sequence belongs to the COPE family. In terms of assembly, oligomeric complex that consists of at least the alpha, beta, beta', gamma, delta, epsilon and zeta subunits.

The protein localises to the cytoplasm. Its subcellular location is the golgi apparatus membrane. It is found in the cytoplasmic vesicle. It localises to the COPI-coated vesicle membrane. In terms of biological role, the coatomer is a cytosolic protein complex that binds to dilysine motifs and reversibly associates with Golgi non-clathrin-coated vesicles, which further mediate biosynthetic protein transport from the ER, via the Golgi up to the trans Golgi network. The coatomer complex is required for budding from Golgi membranes, and is essential for the retrograde Golgi-to-ER transport of dilysine-tagged proteins. In Oryza sativa subsp. japonica (Rice), this protein is Coatomer subunit epsilon-1 (COPE1).